The primary structure comprises 344 residues: L-rhamnose-proton symporter (344 aa).

10 helical membrane-spanning segments follow: residues 4–24, 38–58, 68–88, 101–121, 131–151, 175–195, 214–234, 259–279, 290–310, and 321–341; these read AITM…CFYA, WSVG…ALLL, FNLS…IGNI, MGIG…TPII, TEGG…VGIV, LLLA…MNAA, LPSY…FCFI, ILLS…YAWG, MSWM…GLVL, and VAVL…VGLG.

Belongs to the L-rhamnose transporter (TC 2.A.7.6) family.

The protein localises to the cell inner membrane. It catalyses the reaction L-rhamnopyranose(in) + H(+)(in) = L-rhamnopyranose(out) + H(+)(out). Functionally, uptake of L-rhamnose across the cytoplasmic membrane with the concomitant transport of protons into the cell (symport system). The sequence is that of L-rhamnose-proton symporter from Salmonella typhi.